A 312-amino-acid polypeptide reads, in one-letter code: Ribosomal protein L11 methyltransferase (312 aa).

S-adenosyl-L-methionine-binding residues include Thr163, Gly184, Asp206, and Asn248.

It belongs to the methyltransferase superfamily. PrmA family.

It localises to the cytoplasm. The catalysed reaction is L-lysyl-[protein] + 3 S-adenosyl-L-methionine = N(6),N(6),N(6)-trimethyl-L-lysyl-[protein] + 3 S-adenosyl-L-homocysteine + 3 H(+). Its function is as follows. Methylates ribosomal protein L11. This chain is Ribosomal protein L11 methyltransferase, found in Clostridium botulinum (strain Okra / Type B1).